A 269-amino-acid polypeptide reads, in one-letter code: MTHLERSRHQQFPFHLVAPSPWPIVVSFSLLSLALSLALAMHGYIGNMNLVWLALFVLTSSATLWFRDIIAEATYLGDHTIAVRKGINLGFLLFVVSEVLIFAGLFWAYFHSAMSPTIELGGVWPPVGIEAVQPTELPLLNTIILLASGATVTYSHHALIQGNRKDALSGLFITTWLIIIFVICQYIEYTNATFTISDGVYGSVFYAGTGLHFLHMVMLATMLAINYWRLRNYHLTSSHHVGYETTVIYLHVLDIIWLFLYIVFYWWGV.

Helical transmembrane passes span 21-41, 45-65, 90-110, 138-160, 167-187, 205-225, and 247-267; these read PWPIVVSFSLLSLALSLALAM, IGNMNLVWLALFVLTSSATLW, GFLLFVVSEVLIFAGLFWAYF, PLLNTIILLASGATVTYSHHALI, ALSGLFITTWLIIIFVICQYI, FYAGTGLHFLHMVMLATMLAI, and VIYLHVLDIIWLFLYIVFYWW.

Belongs to the cytochrome c oxidase subunit 3 family. Component of the cytochrome c oxidase (complex IV, CIV), a multisubunit enzyme composed of a catalytic core of 3 subunits and several supernumerary subunits. The complex exists as a monomer or a dimer and forms supercomplexes (SCs) in the inner mitochondrial membrane with ubiquinol-cytochrome c oxidoreductase (cytochrome b-c1 complex, complex III, CIII).

It is found in the mitochondrion inner membrane. The enzyme catalyses 4 Fe(II)-[cytochrome c] + O2 + 8 H(+)(in) = 4 Fe(III)-[cytochrome c] + 2 H2O + 4 H(+)(out). Functionally, component of the cytochrome c oxidase, the last enzyme in the mitochondrial electron transport chain which drives oxidative phosphorylation. The respiratory chain contains 3 multisubunit complexes succinate dehydrogenase (complex II, CII), ubiquinol-cytochrome c oxidoreductase (cytochrome b-c1 complex, complex III, CIII) and cytochrome c oxidase (complex IV, CIV), that cooperate to transfer electrons derived from NADH and succinate to molecular oxygen, creating an electrochemical gradient over the inner membrane that drives transmembrane transport and the ATP synthase. Cytochrome c oxidase is the component of the respiratory chain that catalyzes the reduction of oxygen to water. Electrons originating from reduced cytochrome c in the intermembrane space (IMS) are transferred via the dinuclear copper A center (CU(A)) of subunit 2 and heme A of subunit 1 to the active site in subunit 1, a binuclear center (BNC) formed by heme A3 and copper B (CU(B)). The BNC reduces molecular oxygen to 2 water molecules using 4 electrons from cytochrome c in the IMS and 4 protons from the mitochondrial matrix. This Lachancea kluyveri (strain ATCC 58438 / CBS 3082 / BCRC 21498 / NBRC 1685 / JCM 7257 / NCYC 543 / NRRL Y-12651) (Yeast) protein is Cytochrome c oxidase subunit 3 (COX3).